The primary structure comprises 301 residues: Formylmethanofuran--tetrahydromethanopterin formyltransferase (301 aa).

It belongs to the FTR family. As to quaternary structure, homotetramer.

It is found in the cytoplasm. It carries out the reaction N-formylmethanofuran + 5,6,7,8-tetrahydromethanopterin + H(+) = N(5)-formyl-5,6,7,8-tetrahydromethanopterin + methanofuran. Its pathway is one-carbon metabolism; methanogenesis from CO(2); 5,10-methenyl-5,6,7,8-tetrahydromethanopterin from CO(2): step 2/3. Its function is as follows. Catalyzes the reversible transfer of a formyl group from formylmethanofuran (formyl-MFR) to tetrahydromethanopterin (H(4)MPT) to produce 5-formyl tetrahydromethanopterin (5-formyl-H(4)MPT) and methanofuran (MFR). The sequence is that of Formylmethanofuran--tetrahydromethanopterin formyltransferase from Methanocaldococcus jannaschii (strain ATCC 43067 / DSM 2661 / JAL-1 / JCM 10045 / NBRC 100440) (Methanococcus jannaschii).